Here is a 496-residue protein sequence, read N- to C-terminus: Ribose import ATP-binding protein RbsA (496 aa).

ABC transporter domains follow at residues 5–242 (IEMK…VGRS) and 252–496 (SQIG…TGGE). 37–44 (GENGAGKS) contributes to the ATP binding site.

This sequence belongs to the ABC transporter superfamily. Ribose importer (TC 3.A.1.2.1) family. As to quaternary structure, the complex is composed of an ATP-binding protein (RbsA), two transmembrane proteins (RbsC) and a solute-binding protein (RbsB).

The protein localises to the cell membrane. The enzyme catalyses D-ribose(out) + ATP + H2O = D-ribose(in) + ADP + phosphate + H(+). Its function is as follows. Part of the ABC transporter complex RbsABC involved in ribose import. Responsible for energy coupling to the transport system. In Bacillus cereus (strain ATCC 14579 / DSM 31 / CCUG 7414 / JCM 2152 / NBRC 15305 / NCIMB 9373 / NCTC 2599 / NRRL B-3711), this protein is Ribose import ATP-binding protein RbsA.